The primary structure comprises 1674 residues: E3 ubiquitin-protein ligase SHPRH (1674 aa).

Residues 1 to 26 (MSSRRKRAPPMKVDEERQQQLHWNMH) are disordered. Positions 12–26 (KVDEERQQQLHWNMH) are enriched in basic and acidic residues. Phosphoserine is present on residues S259 and S261. The Helicase ATP-binding; first part domain maps to 302–384 (YQREAVNWML…TVEVLALILT (83 aa)). 368–375 (DEMGLGKT) serves as a coordination point for ATP. Positions 433–507 (HCPPTRVMIL…GFSGTFTLGK (75 aa)) constitute an H15 domain. Residues 524–548 (SPRKIEKELRKSVNKDADSEYLPSN) form a disordered region. Basic and acidic residues predominate over residues 526 to 541 (RKIEKELRKSVNKDAD). Residue S626 is modified to Phosphoserine. Residues 649–700 (RFECICGEFDQIGHKPRVQCLKCHLWQHAKCVNYEEKNLKVKPFYCPHCLVA) form a PHD-type zinc finger. The Helicase ATP-binding; second part domain maps to 701–859 (MEPVSTRATL…FGLVVFLGIE (159 aa)). Positions 810–813 (DEAQ) match the DEAQ box motif. Residues 1423–1470 (CPICARQLGKQWAVLTCGHCFCNECTSIIIEQYSVGSHRSSIKCAICR) form an RING-type zinc finger. Residues 1505-1663 (AVVRTLMKIQ…ASVLTVAGLA (159 aa)) form the Helicase C-terminal domain.

The protein belongs to the SNF2/RAD54 helicase family. In terms of assembly, homodimer. Interacts with HLTF, PCNA, UBE2N and RAD18. In terms of tissue distribution, broadly expressed (at protein level).

It catalyses the reaction S-ubiquitinyl-[E2 ubiquitin-conjugating enzyme]-L-cysteine + [acceptor protein]-L-lysine = [E2 ubiquitin-conjugating enzyme]-L-cysteine + N(6)-ubiquitinyl-[acceptor protein]-L-lysine.. It functions in the pathway protein modification; protein ubiquitination. Functionally, E3 ubiquitin-protein ligase involved in DNA repair. Upon genotoxic stress, accepts ubiquitin from the UBE2N-UBE2V2 E2 complex and transfers it to 'Lys-164' of PCNA which had been monoubiquitinated by UBE2A/B-RAD18, promoting the formation of non-canonical poly-ubiquitin chains linked through 'Lys-63'. This chain is E3 ubiquitin-protein ligase SHPRH (Shprh), found in Mus musculus (Mouse).